We begin with the raw amino-acid sequence, 321 residues long: tRNA dimethylallyltransferase (321 aa).

24 to 31 is a binding site for ATP; the sequence is GPTASGKS. 26–31 lines the substrate pocket; it reads TASGKS. Interaction with substrate tRNA stretches follow at residues 49–52 and 172–176; these read DSMQ and QRIVR.

Belongs to the IPP transferase family. As to quaternary structure, monomer. Mg(2+) serves as cofactor.

The catalysed reaction is adenosine(37) in tRNA + dimethylallyl diphosphate = N(6)-dimethylallyladenosine(37) in tRNA + diphosphate. Catalyzes the transfer of a dimethylallyl group onto the adenine at position 37 in tRNAs that read codons beginning with uridine, leading to the formation of N6-(dimethylallyl)adenosine (i(6)A). The protein is tRNA dimethylallyltransferase of Mesorhizobium japonicum (strain LMG 29417 / CECT 9101 / MAFF 303099) (Mesorhizobium loti (strain MAFF 303099)).